Here is a 140-residue protein sequence, read N- to C-terminus: Large ribosomal subunit protein uL14 (140 aa).

This sequence belongs to the universal ribosomal protein uL14 family.

This is Large ribosomal subunit protein uL14 (RPL23) from Nicotiana tabacum (Common tobacco).